Reading from the N-terminus, the 427-residue chain is GTPase Obg (427 aa).

The region spanning 1–158 (MFVDQVKIYV…RDVTLELKVL (158 aa)) is the Obg domain. One can recognise an OBG-type G domain in the interval 159 to 329 (ADVGLVGFPS…LLFEVANLLE (171 aa)). GTP is bound by residues 165–172 (GFPSVGKS), 190–194 (FTTIV), 212–215 (DLPG), 282–285 (NKMD), and 310–312 (SAV). The Mg(2+) site is built by S172 and T192. In terms of domain architecture, OCT spans 349–427 (YKFESESNFE…ILEYQFEFID (79 aa)).

The protein belongs to the TRAFAC class OBG-HflX-like GTPase superfamily. OBG GTPase family. Monomer. Mg(2+) is required as a cofactor.

Its subcellular location is the cytoplasm. An essential GTPase which binds GTP, GDP and possibly (p)ppGpp with moderate affinity, with high nucleotide exchange rates and a fairly low GTP hydrolysis rate. Plays a role in control of the cell cycle, stress response, ribosome biogenesis and in those bacteria that undergo differentiation, in morphogenesis control. In Bacillus mycoides (strain KBAB4) (Bacillus weihenstephanensis), this protein is GTPase Obg.